The sequence spans 479 residues: D-aminoacyl-tRNA deacylase (479 aa).

Belongs to the DtdA deacylase family. Monomer. Requires Zn(2+) as cofactor.

The catalysed reaction is a D-aminoacyl-tRNA + H2O = a tRNA + a D-alpha-amino acid + H(+). It catalyses the reaction glycyl-tRNA(Ala) + H2O = tRNA(Ala) + glycine + H(+). Its function is as follows. D-aminoacyl-tRNA deacylase with broad substrate specificity. By recycling D-aminoacyl-tRNA to D-amino acids and free tRNA molecules, this enzyme counteracts the toxicity associated with the formation of D-aminoacyl-tRNA entities in vivo. The protein is D-aminoacyl-tRNA deacylase of Methanococcoides burtonii (strain DSM 6242 / NBRC 107633 / OCM 468 / ACE-M).